The chain runs to 138 residues: MSSGVQPTQECLEKFQELKTGKKLTYVIYGLSEDKRSIVVLKASEDKDFDSFVAELPEKDCRWAVYDFEFTLPGGEGVRNKLCFIVWSPDDASVKNKMIFASSKEAIRRRLDGIHTEIQATDFSEITKDALFEKATRK.

Residues 2-136 (SSGVQPTQEC…TKDALFEKAT (135 aa)) enclose the ADF-H domain.

It belongs to the actin-binding proteins ADF family.

Its subcellular location is the cytoplasm. The protein resides in the cytoskeleton. It localises to the nucleus matrix. Its function is as follows. Controls reversibly actin polymerization and depolymerization in a pH-sensitive manner. It has the ability to bind G- and F-actin in a 1:1 ratio of cofilin to actin. Binding to F-actin is regulated by tropomyosin. It is the major component of intranuclear and cytoplasmic actin rods. Required for accumulation of actin at the cell division site via depolymerizing actin at the cell ends. In association with myosin II has a role in the assembly of the contractile ring via severing actin filaments. Involved in the maintenance of the contractile ring once formed. In association with profilin and capping protein, has a role in the mitotic reorganization of the actin cytoskeleton. This chain is Cofilin (COF1), found in Cryptococcus neoformans var. neoformans serotype D (strain B-3501A) (Filobasidiella neoformans).